The primary structure comprises 248 residues: Triosephosphate isomerase (248 aa).

Position 9–11 (asparagine 9–lysine 11) interacts with substrate. The active-site Electrophile is histidine 94. The active-site Proton acceptor is glutamate 166. Substrate contacts are provided by residues glycine 172, serine 211, and glycine 232–glycine 233.

It belongs to the triosephosphate isomerase family. As to quaternary structure, homodimer.

It localises to the cytoplasm. The catalysed reaction is D-glyceraldehyde 3-phosphate = dihydroxyacetone phosphate. Its pathway is carbohydrate biosynthesis; gluconeogenesis. It functions in the pathway carbohydrate degradation; glycolysis; D-glyceraldehyde 3-phosphate from glycerone phosphate: step 1/1. In terms of biological role, involved in the gluconeogenesis. Catalyzes stereospecifically the conversion of dihydroxyacetone phosphate (DHAP) to D-glyceraldehyde-3-phosphate (G3P). In Herminiimonas arsenicoxydans, this protein is Triosephosphate isomerase.